A 39-amino-acid polypeptide reads, in one-letter code: Cytochrome b559 subunit beta (39 aa).

Residues W14–S30 traverse the membrane as a helical segment. H18 is a binding site for heme.

Belongs to the PsbE/PsbF family. In terms of assembly, heterodimer of an alpha subunit and a beta subunit. PSII is composed of 1 copy each of membrane proteins PsbA, PsbB, PsbC, PsbD, PsbE, PsbF, PsbH, PsbI, PsbJ, PsbK, PsbL, PsbM, PsbT, PsbX, PsbY, PsbZ, Psb30/Ycf12, at least 3 peripheral proteins of the oxygen-evolving complex and a large number of cofactors. It forms dimeric complexes. The cofactor is heme b.

It is found in the plastid. The protein resides in the chloroplast thylakoid membrane. This b-type cytochrome is tightly associated with the reaction center of photosystem II (PSII). PSII is a light-driven water:plastoquinone oxidoreductase that uses light energy to abstract electrons from H(2)O, generating O(2) and a proton gradient subsequently used for ATP formation. It consists of a core antenna complex that captures photons, and an electron transfer chain that converts photonic excitation into a charge separation. This is Cytochrome b559 subunit beta from Cucumis sativus (Cucumber).